The sequence spans 111 residues: Small ribosomal subunit protein bS16 (111 aa).

This sequence belongs to the bacterial ribosomal protein bS16 family.

The sequence is that of Small ribosomal subunit protein bS16 from Rickettsia canadensis (strain McKiel).